The chain runs to 463 residues: Xanthine permease XanP (463 aa).

The next 12 membrane-spanning stretches (helical) occupy residues 43–63 (LLAM…ALGL), 71–91 (IISM…KAWG), 93–113 (VGSG…PLIM), 126–146 (PTMM…EMVI), 156–176 (IITP…LIQV), 192–212 (TFGA…IILL), 222–242 (VASL…MGML), 260–280 (LYYG…VFMI), 352–372 (GFVV…SGFV), 379–399 (VLGG…VRIV), 409–429 (ILII…PLIL), and 439–459 (LLSS…LIFP).

Belongs to the nucleobase:cation symporter-2 (NCS2) (TC 2.A.40) family.

It is found in the cell inner membrane. The catalysed reaction is xanthine(in) + H(+)(in) = xanthine(out) + H(+)(out). Functionally, specific, proton motive force-dependent high-affinity transporter for xanthine. The sequence is that of Xanthine permease XanP (xanP) from Escherichia coli O6:H1 (strain CFT073 / ATCC 700928 / UPEC).